A 264-amino-acid chain; its full sequence is Small ribosomal subunit protein uS2 (264 aa).

A disordered region spans residues 228–264; it reads HEDVSAGPVEEQSDEAQAAEQGTEGDTAQLTSSQGRS. A compositionally biased stretch (polar residues) spans 251-264; it reads EGDTAQLTSSQGRS.

Belongs to the universal ribosomal protein uS2 family.

In Deinococcus radiodurans (strain ATCC 13939 / DSM 20539 / JCM 16871 / CCUG 27074 / LMG 4051 / NBRC 15346 / NCIMB 9279 / VKM B-1422 / R1), this protein is Small ribosomal subunit protein uS2.